A 276-amino-acid polypeptide reads, in one-letter code: Large ribosomal subunit protein uL2 (276 aa).

2 disordered regions span residues 30–52 (VKGLTEGKNKSGGRNNHGRTTSR) and 224–257 (VMNPVDHPHGGGEGRTSGGRHPVTPWGKPTKGYK). Positions 41–52 (GGRNNHGRTTSR) are enriched in polar residues.

It belongs to the universal ribosomal protein uL2 family. Part of the 50S ribosomal subunit. Forms a bridge to the 30S subunit in the 70S ribosome.

In terms of biological role, one of the primary rRNA binding proteins. Required for association of the 30S and 50S subunits to form the 70S ribosome, for tRNA binding and peptide bond formation. It has been suggested to have peptidyltransferase activity; this is somewhat controversial. Makes several contacts with the 16S rRNA in the 70S ribosome. The chain is Large ribosomal subunit protein uL2 from Gluconacetobacter diazotrophicus (strain ATCC 49037 / DSM 5601 / CCUG 37298 / CIP 103539 / LMG 7603 / PAl5).